A 158-amino-acid polypeptide reads, in one-letter code: Cyclic pyranopterin monophosphate synthase (158 aa).

Residues 75-77 (LCH) and 113-114 (ME) each bind substrate. Aspartate 128 is an active-site residue.

This sequence belongs to the MoaC family. In terms of assembly, homohexamer; trimer of dimers.

It carries out the reaction (8S)-3',8-cyclo-7,8-dihydroguanosine 5'-triphosphate = cyclic pyranopterin phosphate + diphosphate. It functions in the pathway cofactor biosynthesis; molybdopterin biosynthesis. In terms of biological role, catalyzes the conversion of (8S)-3',8-cyclo-7,8-dihydroguanosine 5'-triphosphate to cyclic pyranopterin monophosphate (cPMP). This chain is Cyclic pyranopterin monophosphate synthase, found in Dinoroseobacter shibae (strain DSM 16493 / NCIMB 14021 / DFL 12).